Consider the following 291-residue polypeptide: Porphobilinogen deaminase (291 aa).

An S-(dipyrrolylmethanemethyl)cysteine modification is found at cysteine 238.

This sequence belongs to the HMBS family. As to quaternary structure, monomer. It depends on dipyrromethane as a cofactor.

The enzyme catalyses 4 porphobilinogen + H2O = hydroxymethylbilane + 4 NH4(+). Its pathway is porphyrin-containing compound metabolism; protoporphyrin-IX biosynthesis; coproporphyrinogen-III from 5-aminolevulinate: step 2/4. In terms of biological role, tetrapolymerization of the monopyrrole PBG into the hydroxymethylbilane pre-uroporphyrinogen in several discrete steps. This chain is Porphobilinogen deaminase, found in Clostridium beijerinckii (strain ATCC 51743 / NCIMB 8052) (Clostridium acetobutylicum).